Here is an 88-residue protein sequence, read N- to C-terminus: MSESSSIKRTLIGRVVSDKMDKTVTVLVERKVKHPMYGKVMVRSKKYHAHNEGNSAKAGDLVEIVETRPVSRTKTWAVTSVLEKAIVV.

Belongs to the universal ribosomal protein uS17 family. As to quaternary structure, part of the 30S ribosomal subunit.

Its function is as follows. One of the primary rRNA binding proteins, it binds specifically to the 5'-end of 16S ribosomal RNA. The chain is Small ribosomal subunit protein uS17 from Dechloromonas aromatica (strain RCB).